A 534-amino-acid chain; its full sequence is Blue-light-activated protein (534 aa).

A PAS domain is found at 20 to 93 (GKDIFFAAVE…QSIRDAIAQR (74 aa)). An S-4a-FMN cysteine modification is found at C70. Residues 94 to 148 (NDISAEIINYRKDGSSFWNALFISPVYNDAGDLIYFFASQLDISRRKDAEEALRQ) enclose the PAC domain. The Histidine kinase domain maps to 161–390 (GIAHDFNNLL…TLRLYFPVDE (230 aa)). A Phosphohistidine; by autocatalysis modification is found at H164. A Response regulatory domain is found at 411-527 (RILIVEDRPD…DLARKVRQVL (117 aa)). The residue at position 461 (D461) is a 4-aspartylphosphate.

In terms of processing, FMN binds covalently to cysteine after exposure to blue light and this bond is spontaneously broken in the dark.

The catalysed reaction is ATP + protein L-histidine = ADP + protein N-phospho-L-histidine.. Its function is as follows. Photosensitive kinase and response regulator that is involved in increased bacterial virulence upon exposure to light. The chain is Blue-light-activated protein from Pseudomonas syringae pv. tomato (strain ATCC BAA-871 / DC3000).